The following is a 197-amino-acid chain: Isochorismatase domain-containing protein 2 (197 aa).

The protein belongs to the isochorismatase family.

This Danio rerio (Zebrafish) protein is Isochorismatase domain-containing protein 2 (isoc2).